A 189-amino-acid polypeptide reads, in one-letter code: Peptidyl-tRNA hydrolase (189 aa).

Residue Y14 coordinates tRNA. Catalysis depends on H19, which acts as the Proton acceptor. Residues Y64, N66, and N112 each coordinate tRNA.

It belongs to the PTH family. As to quaternary structure, monomer.

Its subcellular location is the cytoplasm. It catalyses the reaction an N-acyl-L-alpha-aminoacyl-tRNA + H2O = an N-acyl-L-amino acid + a tRNA + H(+). In terms of biological role, hydrolyzes ribosome-free peptidyl-tRNAs (with 1 or more amino acids incorporated), which drop off the ribosome during protein synthesis, or as a result of ribosome stalling. Catalyzes the release of premature peptidyl moieties from peptidyl-tRNA molecules trapped in stalled 50S ribosomal subunits, and thus maintains levels of free tRNAs and 50S ribosomes. The sequence is that of Peptidyl-tRNA hydrolase from Finegoldia magna (strain ATCC 29328 / DSM 20472 / WAL 2508) (Peptostreptococcus magnus).